The sequence spans 881 residues: Alanine--tRNA ligase (881 aa).

4 residues coordinate Zn(2+): histidine 568, histidine 572, cysteine 670, and histidine 674.

The protein belongs to the class-II aminoacyl-tRNA synthetase family. Requires Zn(2+) as cofactor.

It is found in the cytoplasm. It catalyses the reaction tRNA(Ala) + L-alanine + ATP = L-alanyl-tRNA(Ala) + AMP + diphosphate. Its function is as follows. Catalyzes the attachment of alanine to tRNA(Ala) in a two-step reaction: alanine is first activated by ATP to form Ala-AMP and then transferred to the acceptor end of tRNA(Ala). Also edits incorrectly charged Ser-tRNA(Ala) and Gly-tRNA(Ala) via its editing domain. This chain is Alanine--tRNA ligase, found in Moorella thermoacetica (strain ATCC 39073 / JCM 9320).